The sequence spans 775 residues: MPLLHTLNTALAVGLLGARYYPEVQTFLGLPDYVGHMKNVVRSVFQGSGLVVVSSDTVGVRGTYSNRGQIGSSLGCILAVPDSGADIEIDLDRLVGTEEEATSCLVEAVGSTADVPRRRVRQKGRFAMHAVNAAKLHFCGVPKPTEANRLAVSKWLVQYCKERHVVDSHIRTIVNTALPRVFTPDAEDIQVVLDLHSVRAHDHRNALAEAGKVRKWWVNLAMHPMTGRSWSRAWRRLCRLPDDQAISFVRXGCLRELVGRETQISRGENPAMRVFPLANPPKVRRIFHICGMGNGLDFGVHNNSLNNLRRGLMERVFYVEDAQKQLKPAPQPIPGIFGKLSGIRRRLVRLAGNHTPVPREKYPSFYKGRRATIYQKALDSLHDRPVSRKDAELKTFVKAEKINFTAKKDPAPRVIQPRDPRYNIEVGKYLKPYEHHLYRAIDAMWGGPTVLKGYDVGELGNIMSNTWDKFRKTCAIGFDMKRFDQHVSVDALRWEHSVYNAGFNCPELAQLLTWQLTNKGVGRASDGFIKYQVDGCRMSGDVNTALGNCLLACSITKYLMKGIKCKLINNGDDCVLFFEADEVDRVRERLHHWIDFGFQCIAEEPQYELEKVEFCQMSPIFDGEGWVMVRNPRVSLSKDSYSTTQWANEKDAARWLAAIGECGLAIAGGVPVLQSYYSCLKRNFGPLAGDYKKKMQDVSFDSGFYRLSKNGMRGSKDVSQDARFSFYRGFGYTPDEQEALEEYYDNLQLLCEWDPTGYKEELSDRWILNEFPTTL.

Positions 473–586 constitute a RdRp catalytic domain; it reads TCAIGFDMKR…FFEADEVDRV (114 aa).

The enzyme catalyses RNA(n) + a ribonucleoside 5'-triphosphate = RNA(n+1) + diphosphate. In terms of biological role, RNA-dependent RNA polymerase that plays an essential role in the virus replication. This Brassica napus subsp. rapifera (Purple mistress) protein is RNA-directed RNA polymerase.